Reading from the N-terminus, the 288-residue chain is Elongation factor Ts (288 aa).

The involved in Mg(2+) ion dislocation from EF-Tu stretch occupies residues T79–V82.

This sequence belongs to the EF-Ts family.

Its subcellular location is the cytoplasm. Associates with the EF-Tu.GDP complex and induces the exchange of GDP to GTP. It remains bound to the aminoacyl-tRNA.EF-Tu.GTP complex up to the GTP hydrolysis stage on the ribosome. The polypeptide is Elongation factor Ts (Ehrlichia ruminantium (strain Welgevonden)).